Reading from the N-terminus, the 325-residue chain is Proto-oncogene Mas (325 aa).

Topologically, residues 1–36 (MDGSNVTSFVVEEPTNISTGRNASVGNAHRQIPIVH) are extracellular. Residues N5, N16, and N22 are each glycosylated (N-linked (GlcNAc...) asparagine). A helical transmembrane segment spans residues 37–61 (WVIMSISPVGFVENGILLWFLCFRM). The Cytoplasmic portion of the chain corresponds to 62-65 (RRNP). A helical membrane pass occupies residues 66 to 86 (FTVYITHLSIADISLLFCIFI). At 87-104 (LSIDYALDYELSSGHYYT) the chain is on the extracellular side. Residues 105–128 (IVTLSVTFLFGYNTGLYLLTAISV) traverse the membrane as a helical segment. Residues 129–149 (ERCLSVLYPIWYRCHRPKYQS) are Cytoplasmic-facing. Residues 150 to 172 (ALVCALLWALSCLVTTMEYVMCI) traverse the membrane as a helical segment. At 173-185 (DREEESHSRNDCR) the chain is on the extracellular side. The helical transmembrane segment at 186–206 (AVIIFIAILSFLVFTPLMLVS) threads the bilayer. At 207–224 (STILVVKIRKNTWASHSS) the chain is on the cytoplasmic side. A helical transmembrane segment spans residues 225-245 (KLYIVIMVTIIIFLIFAMPMR). The Extracellular segment spans residues 246–263 (LLYLLYYEYWSTFGNLHH). The chain crosses the membrane as a helical span at residues 264-284 (ISLLFSTINSSANPFIYFFVG). Over 285–325 (SSKKKRFKESLKVVLTRAFKDEMQPRRQKDNCNTVTVETVV) the chain is Cytoplasmic.

The protein belongs to the G-protein coupled receptor 1 family. In terms of assembly, interacts with AGTR1. Interacts with FLNA (via filamin repeat 21); increases PKA-mediated phosphorylation of FLNA.

The protein localises to the cell membrane. Receptor for angiotensin 1-7. Acts specifically as a functional antagonist of AGTR1 (angiotensin-2 type 1 receptor), although it up-regulates AGTR1 receptor levels. Positive regulation of AGTR1 levels occurs through activation of the G-proteins GNA11 and GNAQ, and stimulation of the protein kinase C signaling cascade. The antagonist effect on AGTR1 function is probably due to AGTR1 being physically altered by MAS1. The sequence is that of Proto-oncogene Mas (MAS1) from Homo sapiens (Human).